The sequence spans 93 residues: Acylphosphatase (93 aa).

Residues T5 to Y93 enclose the Acylphosphatase-like domain. Catalysis depends on residues R20 and N38.

This sequence belongs to the acylphosphatase family.

It catalyses the reaction an acyl phosphate + H2O = a carboxylate + phosphate + H(+). This Listeria monocytogenes serotype 4b (strain F2365) protein is Acylphosphatase (acyP).